The primary structure comprises 133 residues: CDGSH iron-sulfur domain-containing protein 2 homolog (133 aa).

Residues 1–35 (MQSVSQVVKTSLPNYLSSLPVPDTFGGWFKLSFKD) lie on the Lumenal side of the membrane. Residues 36–58 (WLALIPPTAVVVGIGYVTYRAFY) form a helical membrane-spanning segment. The Cytoplasmic portion of the chain corresponds to 59–133 (PKAHRTCKSG…NVGPIVIKKK (75 aa)). 4 residues coordinate [2Fe-2S] cluster: C99, C101, C110, and H114.

It belongs to the CISD protein family. CISD2 subfamily. It depends on [2Fe-2S] cluster as a cofactor.

It is found in the endoplasmic reticulum membrane. In Drosophila virilis (Fruit fly), this protein is CDGSH iron-sulfur domain-containing protein 2 homolog.